The primary structure comprises 599 residues: Calmodulin-binding protein 60 E (599 aa).

A disordered region spans residues 1 to 21 (MNKRGYECSQEDTDKLPESKR). Residues 1–80 (MNKRGYECSQ…LTSRSPEPKR (80 aa)) are calmodulin-binding. Positions 150-273 (EDDEDWTREH…VLHKKLLKAN (124 aa)) are DNA-binding.

The protein belongs to the plant ACBP60 protein family. As to quaternary structure, interacts with calmodulin (CaM).

It localises to the nucleus. Its function is as follows. Transcription activator that binds DNA in a sequence-specific manner, likely 5'-GAAATTTTGG-3', to promote the expression of target genes. This chain is Calmodulin-binding protein 60 E, found in Arabidopsis thaliana (Mouse-ear cress).